Here is a 152-residue protein sequence, read N- to C-terminus: Superoxide dismutase [Cu-Zn] (152 aa).

The Cu cation site is built by H44, H46, and H61. Positions 61, 69, 78, and 81 each coordinate Zn(2+). H118 is a Cu cation binding site.

The protein belongs to the Cu-Zn superoxide dismutase family. Homodimer. The cofactor is Cu cation. Zn(2+) serves as cofactor.

It localises to the cytoplasm. It carries out the reaction 2 superoxide + 2 H(+) = H2O2 + O2. Functionally, destroys radicals which are normally produced within the cells and which are toxic to biological systems. The protein is Superoxide dismutase [Cu-Zn] of Drosophila pseudoobscura pseudoobscura (Fruit fly).